Consider the following 257-residue polypeptide: Acetylglutamate kinase (257 aa).

Substrate contacts are provided by residues 41–42 (GG), Arg63, and Asn155.

It belongs to the acetylglutamate kinase family. ArgB subfamily.

The protein resides in the cytoplasm. It catalyses the reaction N-acetyl-L-glutamate + ATP = N-acetyl-L-glutamyl 5-phosphate + ADP. Its pathway is amino-acid biosynthesis; L-arginine biosynthesis; N(2)-acetyl-L-ornithine from L-glutamate: step 2/4. Catalyzes the ATP-dependent phosphorylation of N-acetyl-L-glutamate. This chain is Acetylglutamate kinase, found in Solibacter usitatus (strain Ellin6076).